A 685-amino-acid polypeptide reads, in one-letter code: Frizzled-8 (685 aa).

The first 27 residues, 1–27 (MEWGYLLEVTSLLAALAVLQRSSGAAA), serve as a signal peptide directing secretion. The Extracellular portion of the chain corresponds to 28–272 (ASAKELACQE…NPFFSQDERA (245 aa)). The FZ domain occupies 30-151 (AKELACQEIT…GNPDTLCMDY (122 aa)). 5 disulfide bridges follow: Cys-35–Cys-96, Cys-43–Cys-89, Cys-80–Cys-118, Cys-107–Cys-148, and Cys-111–Cys-135. A glycan (N-linked (GlcNAc...) asparagine) is linked at Asn-49. 71–78 (QFWPLVEI) contacts hexadecanoate. A wnt-binding region spans residues 95-100 (ICLEDY). The wnt-binding stretch occupies residues 147-152 (LCMDYN). N-linked (GlcNAc...) asparagine glycosylation occurs at Asn-152. Residues 155–223 (DLTTAAPSPP…KARPPGGGAA (69 aa)) are disordered. Positions 161-176 (PSPPRRLPPPPPPGEQ) are enriched in pro residues. 2 stretches are compositionally biased toward low complexity: residues 177-187 (PPSGSGHSRPP) and 200-223 (GSGDAAAAPPSRGGKARPPGGGAA). A helical membrane pass occupies residues 273–293 (FTVFWIGLWSVLCFVSTFATV). Residues 294-309 (STFLIDMERFKYPERP) lie on the Cytoplasmic side of the membrane. A helical transmembrane segment spans residues 310–330 (IIFLSACYLFVSVGYLVRLVA). The Extracellular portion of the chain corresponds to 331-394 (GHEKVACSGG…RYETTGPALC (64 aa)). The helical transmembrane segment at 395–415 (TVVFLLVYFFGMASSIWWVIL) threads the bilayer. Topologically, residues 416–437 (SLTWFLAAGMKWGNEAIAGYSQ) are cytoplasmic. The chain crosses the membrane as a helical span at residues 438–458 (YFHLAAWLVPSVKSIAVLALS). Residues 459-481 (SVDGDPVAGICYVGNQSLDNLRG) lie on the Extracellular side of the membrane. N-linked (GlcNAc...) asparagine glycosylation occurs at Asn-473. A helical transmembrane segment spans residues 482–502 (FVLAPLVIYLFIGTMFLLAGF). Topologically, residues 503 to 530 (VSLFRIRSVIKQQGGPTKTHKLEKLMIR) are cytoplasmic. A helical membrane pass occupies residues 531–551 (LGLFTVLYTVPAAVVVACLFY). At 552–582 (EQHNRPRWEATHNCPCLRDLQPDQARRPDYA) the chain is on the extracellular side. Residues 583-603 (VFMLKYFMCLVVGITSGVWVW) form a helical membrane-spanning segment. At 604 to 685 (SGKTLESWRA…YPKQMPLSQV (82 aa)) the chain is on the cytoplasmic side. The short motif at 606-611 (KTLESW) is the Lys-Thr-X-X-X-Trp motif, mediates interaction with the PDZ domain of Dvl family members element. Residues 631–655 (AGGSGPGGSGPGPGGGGGHGGGGGS) show a composition bias toward gly residues. The interval 631–656 (AGGSGPGGSGPGPGGGGGHGGGGGSL) is disordered. The PDZ-binding signature appears at 683–685 (SQV).

The protein belongs to the G-protein coupled receptor Fz/Smo family. Component of a Wnt-signaling complex that contains a WNT protein, a FZD protein and LRP5 or LRP6. Interacts directly with LRP5 or LRP6; the interaction is promoted by Wnt-binding and signaling and inhibited by DKK1. Interacts (via the PDZ-binding motif) with GPOC (via its PDZ domain). Interacts with RSPO1 and RSPO3. Interacts with glypican GPC3. Post-translationally, ubiquitinated by ZNRF3, leading to its degradation by the proteasome. As to expression, expressed in chondrocytes.

The protein localises to the membrane. Its subcellular location is the golgi apparatus. It localises to the cell membrane. Its function is as follows. Receptor for Wnt proteins. Component of the Wnt-Fzd-LRP5-LRP6 complex that triggers beta-catenin signaling through inducing aggregation of receptor-ligand complexes into ribosome-sized signalosomes. The beta-catenin canonical signaling pathway leads to the activation of disheveled proteins, inhibition of GSK-3 kinase, nuclear accumulation of beta-catenin and activation of Wnt target genes. A second signaling pathway involving PKC and calcium fluxes has been seen for some family members, but it is not yet clear if it represents a distinct pathway or if it can be integrated in the canonical pathway, as PKC seems to be required for Wnt-mediated inactivation of GSK-3 kinase. Both pathways seem to involve interactions with G-proteins. May be involved in transduction and intercellular transmission of polarity information during tissue morphogenesis and/or in differentiated tissues. Coreceptor along with RYK of Wnt proteins, such as WNT1. This Mus musculus (Mouse) protein is Frizzled-8 (Fzd8).